The primary structure comprises 430 residues: Histidine--tRNA ligase (430 aa).

The protein belongs to the class-II aminoacyl-tRNA synthetase family. As to quaternary structure, homodimer.

It is found in the cytoplasm. It carries out the reaction tRNA(His) + L-histidine + ATP = L-histidyl-tRNA(His) + AMP + diphosphate + H(+). The chain is Histidine--tRNA ligase from Synechococcus sp. (strain CC9902).